The following is a 239-amino-acid chain: Orotidine 5'-phosphate decarboxylase (239 aa).

Substrate contacts are provided by residues aspartate 10, lysine 32, 59 to 68 (DLKLHDIPNT), threonine 122, arginine 184, glutamine 193, glycine 213, and arginine 214. Lysine 61 functions as the Proton donor in the catalytic mechanism.

This sequence belongs to the OMP decarboxylase family. Type 1 subfamily. As to quaternary structure, homodimer.

The enzyme catalyses orotidine 5'-phosphate + H(+) = UMP + CO2. It functions in the pathway pyrimidine metabolism; UMP biosynthesis via de novo pathway; UMP from orotate: step 2/2. In terms of biological role, catalyzes the decarboxylation of orotidine 5'-monophosphate (OMP) to uridine 5'-monophosphate (UMP). This chain is Orotidine 5'-phosphate decarboxylase, found in Geobacillus thermodenitrificans (strain NG80-2).